The chain runs to 128 residues: L-ectoine synthase (128 aa).

It belongs to the ectoine synthase family.

The catalysed reaction is (2S)-4-acetamido-2-aminobutanoate = L-ectoine + H2O. The protein operates within amine and polyamine biosynthesis; ectoine biosynthesis; L-ectoine from L-aspartate 4-semialdehyde: step 3/3. In terms of biological role, catalyzes the circularization of gamma-N-acetyl-alpha,gamma-diaminobutyric acid (ADABA) to ectoine (1,4,5,6-tetrahydro-2-methyl-4-pyrimidine carboxylic acid), which is an excellent osmoprotectant. This Oceanobacillus iheyensis (strain DSM 14371 / CIP 107618 / JCM 11309 / KCTC 3954 / HTE831) protein is L-ectoine synthase.